We begin with the raw amino-acid sequence, 655 residues long: p-hydroxybenzoic acid efflux pump subunit AaeB (655 aa).

11 consecutive transmembrane segments (helical) span residues 13–33 (FAVK…HFQL), 38–58 (WAVL…GGEP), 69–89 (LRII…IAMI), 93–113 (LLMI…SSLV), 121–141 (WGLA…EPLL), 152–172 (EIVI…PRSI), 370–390 (LFWL…IAVV), 407–427 (FIYG…VIIP), 431–451 (QSML…GIEV), 455–475 (LLGS…DNPM), and 482–502 (FLDS…VILL).

It belongs to the aromatic acid exporter ArAE (TC 2.A.85) family.

It localises to the cell inner membrane. Its function is as follows. Forms an efflux pump with AaeA. Could function as a metabolic relief valve, allowing to eliminate certain compounds when they accumulate to high levels in the cell. The chain is p-hydroxybenzoic acid efflux pump subunit AaeB from Shigella boydii serotype 4 (strain Sb227).